A 1704-amino-acid chain; its full sequence is Phospholipid-transporting ATPase ABCA3 (1704 aa).

N-linked (GlcNAc...) asparagine glycosylation occurs at asparagine 14. Residues valine 22–leucine 42 form a helical membrane-spanning segment. 3 N-linked (GlcNAc...) asparagine glycosylation sites follow: asparagine 53, asparagine 124, and asparagine 140. The next 6 helical transmembrane spans lie at tyrosine 261–valine 283, alanine 307–phenylalanine 327, serine 344–valine 364, methionine 373–alanine 393, leucine 405–phenylalanine 425, and phenylalanine 447–threonine 467. One can recognise an ABC transporter 1 domain in the interval isoleucine 530 to valine 763. Glycine 566–threonine 573 is a binding site for ATP. Asparagine 620 and asparagine 783 each carry an N-linked (GlcNAc...) asparagine glycan. The next 7 helical transmembrane spans lie at methionine 925 to asparagine 945, isoleucine 1100 to valine 1120, serine 1144 to phenylalanine 1164, leucine 1183 to phenylalanine 1203, leucine 1213 to isoleucine 1233, leucine 1245 to tyrosine 1265, and phenylalanine 1306 to threonine 1326. Residues leucine 1381–lysine 1614 enclose the ABC transporter 2 domain. Glycine 1416–threonine 1423 lines the ATP pocket.

It belongs to the ABC transporter superfamily. ABCA family. As to quaternary structure, homooligomer; disulfide-linked. N-glycosylated. Localization at intracellular vesicles is accompanied by processing of oligosaccharide from high mannose type to complex type. N-linked glycosylation at Asn-124 and Asn-140 is required for stability and efficient anterograde trafficking and prevents from proteasomal degradation. Post-translationally, proteolytically cleaved by CTSL and to a lower extent by CTSB within multivesicular bodies (MVB) and lamellar bodies (LB) leading to a mature form of 150 kDa. In terms of tissue distribution, expressed in brain, pancreas, skeletal muscle and heart. Highly expressed in the lung in an AT2-cell-specific manner. Weakly expressed in placenta, kidney and liver. Also expressed in medullary thyroid carcinoma cells (MTC) and in C-cell carcinoma.

The protein localises to the endosome. Its subcellular location is the multivesicular body membrane. The protein resides in the cytoplasmic vesicle membrane. It is found in the late endosome membrane. It localises to the lysosome membrane. The enzyme catalyses ATP + H2O + xenobioticSide 1 = ADP + phosphate + xenobioticSide 2.. It catalyses the reaction a 1,2-diacyl-sn-glycero-3-phosphocholine(in) + ATP + H2O = a 1,2-diacyl-sn-glycero-3-phosphocholine(out) + ADP + phosphate + H(+). The catalysed reaction is ATP + H2O + phospholipidSide 1 = ADP + phosphate + phospholipidSide 2.. It carries out the reaction 1,2-dihexadecanoyl-sn-glycero-3-phosphocholine(in) + ATP + H2O = 1,2-dihexadecanoyl-sn-glycero-3-phosphocholine(out) + ADP + phosphate + H(+). The enzyme catalyses cholesterol(in) + ATP + H2O = cholesterol(out) + ADP + phosphate + H(+). It catalyses the reaction a 1,2-diacyl-sn-glycero-3-phospho-(1'-sn-glycerol)(in) + ATP + H2O = a 1,2-diacyl-sn-glycero-3-phospho-(1'-sn-glycerol)(out) + ADP + phosphate + H(+). The ATP-dependent phosphatidylcholine transport is competitively inhibited by miltefosine. Its function is as follows. Catalyzes the ATP-dependent transport of phospholipids such as phosphatidylcholine and phosphoglycerol from the cytoplasm into the lumen side of lamellar bodies, in turn participates in the lamellar bodies biogenesis and homeostasis of pulmonary surfactant. Transports preferentially phosphatidylcholine containing short acyl chains. In addition plays a role as an efflux transporter of miltefosine across macrophage membranes and free cholesterol (FC) through intralumenal vesicles by removing FC from the cell as a component of surfactant and protects cells from free cholesterol toxicity. The sequence is that of Phospholipid-transporting ATPase ABCA3 from Homo sapiens (Human).